Consider the following 63-residue polypeptide: Large ribosomal subunit protein bL35 (63 aa).

This sequence belongs to the bacterial ribosomal protein bL35 family.

This Campylobacter jejuni subsp. jejuni serotype O:2 (strain ATCC 700819 / NCTC 11168) protein is Large ribosomal subunit protein bL35.